The primary structure comprises 139 residues: Intrinsically disordered protein, expressed in pharynx 15 (139 aa).

A compositionally biased stretch (polar residues) spans 1–12 (MNNNQGMYNTQT). A disordered region spans residues 1 to 98 (MNNNQGMYNT…GSSTPSPQYS (98 aa)). Composition is skewed to low complexity over residues 13–41 (TQGY…QTTT) and 49–98 (QPQQ…PQYS).

The sequence is that of Intrinsically disordered protein, expressed in pharynx 15 from Caenorhabditis elegans.